A 419-amino-acid polypeptide reads, in one-letter code: Transcription termination factor Rho (419 aa).

A Rho RNA-BD domain is found at 48–123; sequence EISGDGVLEI…LKVDTINFDR (76 aa). RNA-binding stretches follow at residues 61-66, 78-80, and 108-110; these read GFGFLR, DIY, and ERY. Residues 169–174, 181–186, and Arg212 each bind ATP; these read GKGQRG and KAGKTI. The interval 284–288 is RNA-binding 2; it reads VLTGG.

It belongs to the Rho family. Homohexamer. The homohexamer assembles into an open ring structure.

Facilitates transcription termination by a mechanism that involves Rho binding to the nascent RNA, activation of Rho's RNA-dependent ATPase activity, and release of the mRNA from the DNA template. The sequence is that of Transcription termination factor Rho from Pseudomonas fluorescens biotype C.